A 163-amino-acid chain; its full sequence is Small ribosomal subunit protein bS6 (163 aa).

The segment at 97–163 (EEGQTAMLTN…GRNEGEGDRA (67 aa)) is disordered. Basic and acidic residues predominate over residues 122 to 163 (RGPRRDFGDRGPRRDFGDRGPRRDGDGPRAEGGRNEGEGDRA).

This sequence belongs to the bacterial ribosomal protein bS6 family.

Its function is as follows. Binds together with bS18 to 16S ribosomal RNA. The polypeptide is Small ribosomal subunit protein bS6 (Rhodospirillum centenum (strain ATCC 51521 / SW)).